Consider the following 474-residue polypeptide: 2-succinylbenzoate--CoA ligase (474 aa).

It belongs to the ATP-dependent AMP-binding enzyme family. MenE subfamily.

The enzyme catalyses 2-succinylbenzoate + ATP + CoA = 2-succinylbenzoyl-CoA + AMP + diphosphate. Its pathway is quinol/quinone metabolism; 1,4-dihydroxy-2-naphthoate biosynthesis; 1,4-dihydroxy-2-naphthoate from chorismate: step 5/7. It functions in the pathway quinol/quinone metabolism; menaquinone biosynthesis. In terms of biological role, converts 2-succinylbenzoate (OSB) to 2-succinylbenzoyl-CoA (OSB-CoA). The chain is 2-succinylbenzoate--CoA ligase from Staphylococcus epidermidis (strain ATCC 12228 / FDA PCI 1200).